The primary structure comprises 258 residues: UPF0758 protein Bcep1808_2579 (258 aa).

An MPN domain is found at 136–258 (PIDSPGAVED…TFSFARAGWL (123 aa)). Residues His207, His209, and Asp220 each contribute to the Zn(2+) site. Residues 207 to 220 (HNHPSGAVQPSAED) carry the JAMM motif motif.

It belongs to the UPF0758 family.

The chain is UPF0758 protein Bcep1808_2579 from Burkholderia vietnamiensis (strain G4 / LMG 22486) (Burkholderia cepacia (strain R1808)).